A 205-amino-acid chain; its full sequence is Mitochondrial ATP-independent inner membrane protease subunit 2 (205 aa).

Catalysis depends on residues glutamate 59 and arginine 104.

The protein belongs to the peptidase S26 family. IMP1 subfamily. Heterodimer of 2 subunits, IMP1A/B and IMP12.

The protein resides in the mitochondrion inner membrane. Functionally, catalyzes the removal of transit peptides required for the targeting of proteins from the mitochondrial matrix, across the inner membrane, into the inter-membrane space. This is Mitochondrial ATP-independent inner membrane protease subunit 2 from Arabidopsis thaliana (Mouse-ear cress).